Consider the following 219-residue polypeptide: Transmembrane emp24 domain-containing protein 10 (219 aa).

Residues 1-31 (MSGLSGPPTRRGPFPLALLLLFLLGPSLVLA) form the signal peptide. Residues 1–142 (MSGLSGPPTR…KNYEEIAKVE (142 aa)) are required for interaction with STX17. Topologically, residues 32-185 (ISFHLPINSR…RDTNESTNTR (154 aa)) are lumenal. Residues 41 to 193 (RKCLREEIHK…TRVLYFSIFS (153 aa)) enclose the GOLD domain. Residues Arg-171 and Arg-176 each carry the dimethylated arginine modification. The N-linked (GlcNAc...) asparagine glycan is linked to Asn-179. Residues 186-206 (VLYFSIFSMFCLIGLATWQVF) traverse the membrane as a helical segment. The segment at 204-219 (QVFYLRRFFKAKKLIE) is interaction with COPG1. Topologically, residues 207 to 219 (YLRRFFKAKKLIE) are cytoplasmic. The interval 207–219 (YLRRFFKAKKLIE) is interaction with ARF1 and IL1B. A COPII vesicle coat-binding motif is present at residues 211–212 (FF). A COPI vesicle coat-binding motif is present at residues 211–219 (FFKAKKLIE).

Belongs to the EMP24/GP25L family. Predominantly dimeric and to a lesser extent monomeric in the ER. Monomer and dimer in ERGIC and cis-Golgi network. Forms homooligomer (via GOLD domain); the assembly is promoted by direct binding with leaderless cargos and may form a protein channel that facilitates cargo entry into the ERGIC. Forms heterooligomeric complexes with other members of the p24 family such as TMED2, TMED7 and TMED9. Interacts (via GOLD domain) with TMED2 (via GOLD domain); the complex is required for export of TMED10 from the ER to the cis-Golgi network; the complex is proposed to be involved in cis-Golgi network dynamics and / or biogenesis. Associates with the COPI vesicle coat subunits (coatomer). Tetramerization of the cytoplasmic domain at the Golgi membrane in vitro; the complex is proposed to interact with COPI coatomer and induce budding of the vesicles. Interacts with COPG1; the interaction involves TMED10 homodimer. Interacts with ARF1 (GDP-bound); the interaction probably involves a TMED10 oligomer. Interacts with SEC23A, SEC24B, SEC24C and SEC24D components of the coat protein complex II/COPII, indicative of an association of TMED10 with the COPII vesicle coat. Interacts with CD59. Interacts with MPPE1/PGAP5; the complex might recruit and sort GPI-anchored proteins to the ER-exit site, or the interaction might lead to recycling of PGAP5 between the ER and the Golgi. Interacts with F2LR1/PAR2. Interacts with KDELR2/ERD2; the interaction is disrupted by KDELR2 ligand. Found in a complex composed at least of SURF4, TMED2 and TMED10. Associates with the presenilin-dependent gamma-secretase complex. Interacts with STX17; the interaction is direct. Interacts with IL-1; the interaction is direct. Interacts with RAB21 (active GTP-bound form); the interaction is indirect and regulates TMED10 abundance and localization at the Golgi.

It is found in the endoplasmic reticulum membrane. The protein localises to the endoplasmic reticulum-Golgi intermediate compartment membrane. It localises to the golgi apparatus membrane. The protein resides in the golgi apparatus. Its subcellular location is the cis-Golgi network membrane. It is found in the trans-Golgi network membrane. The protein localises to the cytoplasmic vesicle. It localises to the secretory vesicle membrane. The protein resides in the cell membrane. Its subcellular location is the melanosome. Functionally, cargo receptor involved in protein vesicular trafficking and quality control in the endoplasmic reticulum (ER) and Golgi. The p24 protein family is a group of transmembrane proteins that bind coat protein complex I/COPI and coat protein complex II/COPII involved in vesicular trafficking between the membranes. Acts at the lumenal side for incorporation of secretory cargo molecules into transport vesicles and involved in vesicle coat formation at the cytoplasmic side. Mainly functions in the early secretory pathway and cycles between the ER, ER-Golgi intermediate compartment (ERGIC) and Golgi, mediating cargo transport through COPI and COPII-coated vesicles. In COPII vesicle-mediated anterograde transport, involved in the transport of GPI-anchored proteins by acting together with TMED2 as their cargo receptor; the function specifically implies SEC24C and SEC24D of the COPII vesicle coat and lipid raft-like microdomains of the ER. Recognizes GPI anchors structural remodeled in the ER by the GPI inositol-deacylase/PGAP1 and the metallophosphoesterase MPPE1/PGAP5. In COPI vesicle-mediated retrograde transport, involved in the biogenesis of COPI vesicles and vesicle coat recruitment. Involved in trafficking of amyloid beta A4 protein and soluble APP-beta release (independent from the modulation of gamma-secretase activity). Involved in the KDELR2-mediated retrograde transport of the toxin A subunit (CTX-A-K63)together with COPI and the COOH terminus of KDELR2. On Golgi membranes, acts as a primary receptor for ARF1-GDP, a GTP-binding protein involved in COPI-vesicle formation. Increases coatomer-dependent GTPase-activating activity of ARFGAP2 which mediates the hydrolysis of ARF1-bound GTP and therefore modulates protein trafficking from the Golgi apparatus. Involved in the exocytic trafficking of G protein-coupled receptors F2LR1/PAR2 (trypsin and tryspin-like enzyme receptor), OPRM1 (opioid receptor) and P2RY4 (UTD and UDP receptor) from the Golgi to the plasma membrane, thus contributing to receptor resensitization. In addition to its cargo receptor activity, may also act as a protein channel after oligomerization, facilitating the post-translational entry of leaderless cytoplasmic cargo into the ERGIC. Involved in the translocation into ERGIC, the vesicle entry and the secretion of leaderless cargos (lacking the secretion signal sequence), including the mature form of interleukin 1/IL-1 family members, the alpha-crystallin B chain HSPB5, the carbohydrate-binding proteins galectin-1/LGALS1 and galectin-3/LGALS3, the microtubule-associated protein Tau/MAPT, and the annexin A1/ANXA1; the translocation process is dependent on cargo protein unfolding and enhanced by chaperones HSP90AB1 and HSP90B1/GRP9. Could also associates with the presenilin-dependent gamma-secretase complex in order to regulate gamma-cleavages of the amyloid beta A4 protein to yield amyloid-beta 40/Abeta40. This chain is Transmembrane emp24 domain-containing protein 10 (TMED10), found in Pongo abelii (Sumatran orangutan).